The primary structure comprises 319 residues: N-acetyllactosaminide alpha-1,3-galactosyltransferase-like 1 (319 aa).

The Cytoplasmic portion of the chain corresponds to 1–6 (MQYKKE). A helical; Signal-anchor for type II membrane protein transmembrane segment spans residues 7-26 (ALLLMLFAVLLALTQRFSYS). Residues 27–319 (RTKDHLQKMY…IKHIKIAWKP (293 aa)) lie on the Lumenal side of the membrane. N89 and N101 each carry an N-linked (GlcNAc...) asparagine glycan. Residues 97–102 (FATGNF), 188–190 (AVN), and 210–213 (HAWW) contribute to the substrate site. E278 functions as the Nucleophile in the catalytic mechanism.

Belongs to the glycosyltransferase 6 family. The cofactor is Mn(2+).

It localises to the golgi apparatus. It is found in the golgi stack membrane. It catalyses the reaction a beta-D-galactosyl-(1-&gt;4)-N-acetyl-beta-D-glucosaminyl derivative + UDP-alpha-D-galactose = an alpha-D-galactosyl-(1-&gt;3)-beta-D-galactosyl-(1-&gt;4)-N-acetyl-beta-D-glucosaminyl derivative + UDP + H(+). It participates in protein modification; protein glycosylation. Its function is as follows. Synthesizes the galactose-alpha(1,3)-galactose group by catalyzing the transfer of a galactose residue, with an alpha-1,3 linkage, on terminal lactosaminide (Gal-beta-1,4-GlcNAc-R) disaccharide borne by a glycoprotein or a glycolipid. This chain is N-acetyllactosaminide alpha-1,3-galactosyltransferase-like 1 (Ggta1l1), found in Mus musculus (Mouse).